Consider the following 404-residue polypeptide: Probable tRNA sulfurtransferase (404 aa).

The region spanning 60 to 165 (RSVIEALKPV…DEAAYLSHED (106 aa)) is the THUMP domain. ATP is bound by residues 183–184 (ML), 208–209 (HF), Arg-265, Gly-287, and Gln-296.

Belongs to the ThiI family.

It localises to the cytoplasm. The catalysed reaction is [ThiI sulfur-carrier protein]-S-sulfanyl-L-cysteine + a uridine in tRNA + 2 reduced [2Fe-2S]-[ferredoxin] + ATP + H(+) = [ThiI sulfur-carrier protein]-L-cysteine + a 4-thiouridine in tRNA + 2 oxidized [2Fe-2S]-[ferredoxin] + AMP + diphosphate. It carries out the reaction [ThiS sulfur-carrier protein]-C-terminal Gly-Gly-AMP + S-sulfanyl-L-cysteinyl-[cysteine desulfurase] + AH2 = [ThiS sulfur-carrier protein]-C-terminal-Gly-aminoethanethioate + L-cysteinyl-[cysteine desulfurase] + A + AMP + 2 H(+). Its pathway is cofactor biosynthesis; thiamine diphosphate biosynthesis. Its function is as follows. Catalyzes the ATP-dependent transfer of a sulfur to tRNA to produce 4-thiouridine in position 8 of tRNAs, which functions as a near-UV photosensor. Also catalyzes the transfer of sulfur to the sulfur carrier protein ThiS, forming ThiS-thiocarboxylate. This is a step in the synthesis of thiazole, in the thiamine biosynthesis pathway. The sulfur is donated as persulfide by IscS. The sequence is that of Probable tRNA sulfurtransferase from Streptococcus equi subsp. zooepidemicus (strain H70).